The chain runs to 601 residues: Chaperone protein DnaK (601 aa).

Residue threonine 175 is modified to Phosphothreonine; by autocatalysis. Positions 570–601 (FAQKAASKETSKNEQNEDGSIDAEIKEEDPKA) are disordered. Positions 575–584 (ASKETSKNEQ) are enriched in basic and acidic residues. A compositionally biased stretch (acidic residues) spans 585–601 (NEDGSIDAEIKEEDPKA).

Belongs to the heat shock protein 70 family.

Functionally, acts as a chaperone. The chain is Chaperone protein DnaK from Mycoplasma mobile (strain ATCC 43663 / 163K / NCTC 11711) (Mesomycoplasma mobile).